The sequence spans 157 residues: Phosphopantetheine adenylyltransferase (157 aa).

Ser-8 is a binding site for substrate. ATP is bound by residues 8–9 (SF) and His-16. The substrate site is built by Lys-40, Thr-72, and Arg-86. ATP-binding positions include 87-89 (GLR), Glu-97, and 122-128 (HSFLSSS).

It belongs to the bacterial CoaD family. As to quaternary structure, homohexamer. Requires Mg(2+) as cofactor.

It is found in the cytoplasm. It catalyses the reaction (R)-4'-phosphopantetheine + ATP + H(+) = 3'-dephospho-CoA + diphosphate. It participates in cofactor biosynthesis; coenzyme A biosynthesis; CoA from (R)-pantothenate: step 4/5. Functionally, reversibly transfers an adenylyl group from ATP to 4'-phosphopantetheine, yielding dephospho-CoA (dPCoA) and pyrophosphate. The sequence is that of Phosphopantetheine adenylyltransferase from Prochlorococcus marinus (strain MIT 9313).